The chain runs to 341 residues: Glyceraldehyde-3-phosphate dehydrogenase 2 (341 aa).

NAD(+) contacts are provided by residues 13-14, D35, and R85; that span reads RI. Residues 157–159, T188, 217–218, and R240 contribute to the D-glyceraldehyde 3-phosphate site; these read SCT and TG. C158 serves as the catalytic Nucleophile. N322 serves as a coordination point for NAD(+).

The protein belongs to the glyceraldehyde-3-phosphate dehydrogenase family. Homotetramer.

The protein resides in the cytoplasm. It carries out the reaction D-glyceraldehyde 3-phosphate + phosphate + NAD(+) = (2R)-3-phospho-glyceroyl phosphate + NADH + H(+). Its pathway is carbohydrate degradation; glycolysis; pyruvate from D-glyceraldehyde 3-phosphate: step 1/5. This is Glyceraldehyde-3-phosphate dehydrogenase 2 (gpd-2) from Caenorhabditis elegans.